Consider the following 158-residue polypeptide: Phosphopantetheine adenylyltransferase (158 aa).

Thr-10 is a substrate binding site. ATP contacts are provided by residues Thr-10–Phe-11 and His-18. Residues Lys-42, Leu-74, and Arg-88 each contribute to the substrate site. Residues Gly-89–Arg-91, Glu-99, and Trp-124–Thr-130 contribute to the ATP site.

The protein belongs to the bacterial CoaD family. In terms of assembly, homohexamer. Requires Mg(2+) as cofactor.

The protein localises to the cytoplasm. The enzyme catalyses (R)-4'-phosphopantetheine + ATP + H(+) = 3'-dephospho-CoA + diphosphate. It functions in the pathway cofactor biosynthesis; coenzyme A biosynthesis; CoA from (R)-pantothenate: step 4/5. In terms of biological role, reversibly transfers an adenylyl group from ATP to 4'-phosphopantetheine, yielding dephospho-CoA (dPCoA) and pyrophosphate. The sequence is that of Phosphopantetheine adenylyltransferase from Actinobacillus pleuropneumoniae serotype 5b (strain L20).